Reading from the N-terminus, the 175-residue chain is Interleukin-10 (175 aa).

The first 21 residues, 1–21 (MQTCCQALLLLLAACTLPAHC), serve as a signal peptide directing secretion. 2 cysteine pairs are disulfide-bonded: C26–C123 and C77–C129.

It belongs to the IL-10 family. Homodimer. Interacts with IL10RA and IL10RB. In terms of tissue distribution, expressed predominantly in bursa of Fabricius and cecal tonsils with low levels in thymus, liver and lung.

The protein resides in the secreted. In terms of biological role, major immune regulatory cytokine that acts on many cells of the immune system where it has profound anti-inflammatory functions, limiting excessive tissue disruption caused by inflammation. Mechanistically, IL10 binds to its heterotetrameric receptor comprising IL10RA and IL10RB leading to JAK1 and STAT2-mediated phosphorylation of STAT3. In turn, STAT3 translocates to the nucleus where it drives expression of anti-inflammatory mediators. Targets antigen-presenting cells (APCs) such as macrophages and monocytes and inhibits their release of pro-inflammatory cytokines including granulocyte-macrophage colony-stimulating factor /GM-CSF, granulocyte colony-stimulating factor/G-CSF, IL-1 alpha, IL-1 beta, IL-6, IL-8 and TNF-alpha. Also interferes with antigen presentation by reducing the expression of MHC-class II and co-stimulatory molecules, thereby inhibiting their ability to induce T cell activation. In addition, controls the inflammatory response of macrophages by reprogramming essential metabolic pathways including mTOR signaling. This is Interleukin-10 from Gallus gallus (Chicken).